The primary structure comprises 344 residues: UDP-galactose/UDP-glucose transporter 5B (344 aa).

Helical transmembrane passes span 16–36, 56–76, 115–135, 142–162, 176–196, 220–240, 246–266, and 292–312; these read LWKG…YGVL, LFLV…ALLA, VQTL…TLIM, FDYL…LFPA, TVWG…TSTF, CVLS…VDFV, CLLD…FISY, and CIWF…IVFG. The segment at 324-344 is disordered; that stretch reads KNSQTQPPPPELPQYEKVESS.

It belongs to the nucleotide-sugar transporter family. UDP-galactose:UMP antiporter (TC 2.A.7.11) subfamily.

The protein resides in the membrane. Sugar transporter involved in the transport of nucleotide-sugars from cytoplasm into the Golgi and/or the endoplasmic reticulum. In Arabidopsis thaliana (Mouse-ear cress), this protein is UDP-galactose/UDP-glucose transporter 5B.